Consider the following 429-residue polypeptide: MEKLLIEGGRALNGTIRVSGAKNSAVALIPATILADTPVTIGGVPNISDVKMLGDLLEEIGGRVTYGQEEEMVVDPSNMVAMPLPNGKVKKLRASYYLMGAMLGRFKKAVIGLPGGCHLGPRPIDQHIKGFEALGAHVTNEQGAIYLRADELRGARIYLDVVSVGATINIMLAAVRAKGRTVIENAAKEPEIIDVATLLTSMGARIKGAGTDVIRIDGVDSLHGCHHTIIPDRIEAGTYMILGAASGGEVTVDNVIPQHLESVTAKLREAGVQVETNDDQITVNGDRRLKVVDIKTLVYPGFPTDLQQPFTTLLTKAHGTGVVTDTIYGARFKHIDELRRMNAQIKVEGRSAIVTGPVLLQGAKVKASDLRAGAALVIAGLMADGITEVTGLEHIDRGYENIVDKLKGLGANIWREQMTKQEIEEMKNA.

Residue 22–23 participates in phosphoenolpyruvate binding; sequence KN. Arginine 93 contributes to the UDP-N-acetyl-alpha-D-glucosamine binding site. The active-site Proton donor is the cysteine 117. At cysteine 117 the chain carries 2-(S-cysteinyl)pyruvic acid O-phosphothioketal. UDP-N-acetyl-alpha-D-glucosamine-binding positions include 122–126, aspartate 305, and isoleucine 327; that span reads RPIDQ.

It belongs to the EPSP synthase family. MurA subfamily.

Its subcellular location is the cytoplasm. It catalyses the reaction phosphoenolpyruvate + UDP-N-acetyl-alpha-D-glucosamine = UDP-N-acetyl-3-O-(1-carboxyvinyl)-alpha-D-glucosamine + phosphate. Its pathway is cell wall biogenesis; peptidoglycan biosynthesis. Cell wall formation. Adds enolpyruvyl to UDP-N-acetylglucosamine. The chain is UDP-N-acetylglucosamine 1-carboxyvinyltransferase 2 from Bacillus anthracis.